The sequence spans 721 residues: ATP-dependent zinc metalloprotease FtsH (721 aa).

Over 1–44 the chain is Cytoplasmic; it reads MYFLKKIVNLFSSKIESEDNNVKKDDLTQPRKQSPEARKRRNRR. Residues 45-65 form a helical membrane-spanning segment; sequence IIFWLIILLIIGTIIGVIIYF. Over 66–190 the chain is Extracellular; it reads SVRKEYDNVI…AGIPSSGFNP (125 aa). Residues 191–211 traverse the membrane as a helical segment; it reads QVIISPLISIIFFIIFLYIIL. At 212–721 the chain is on the cytoplasmic side; the sequence is RVSKAQSDSL…KDKEKDQKSN (510 aa). An ATP-binding site is contributed by 279 to 286; that stretch reads GPPGTGKT. His-498 serves as a coordination point for Zn(2+). Glu-499 is an active-site residue. His-502 and Asp-577 together coordinate Zn(2+). Residues 686–721 are disordered; that stretch reads NKREASQKQANSSVEEAKVVDDEESIKDKEKDQKSN. The segment covering 700-721 has biased composition (basic and acidic residues); the sequence is EEAKVVDDEESIKDKEKDQKSN.

The protein in the central section; belongs to the AAA ATPase family. This sequence in the C-terminal section; belongs to the peptidase M41 family. As to quaternary structure, homohexamer. Zn(2+) serves as cofactor.

It localises to the cell membrane. In terms of biological role, acts as a processive, ATP-dependent zinc metallopeptidase for both cytoplasmic and membrane proteins. Plays a role in the quality control of integral membrane proteins. In Ureaplasma parvum serovar 3 (strain ATCC 27815 / 27 / NCTC 11736), this protein is ATP-dependent zinc metalloprotease FtsH.